We begin with the raw amino-acid sequence, 286 residues long: 5'-3' exonuclease (286 aa).

Residues 172 to 270 (IKPKEFIDFL…IKLKDIILKK (99 aa)) enclose the 5'-3' exonuclease domain.

Its function is as follows. 5'-3' exonuclease acting preferentially on double-stranded DNA. The polypeptide is 5'-3' exonuclease (Buchnera aphidicola subsp. Acyrthosiphon pisum (strain APS) (Acyrthosiphon pisum symbiotic bacterium)).